A 148-amino-acid chain; its full sequence is Small ribosomal subunit protein eS6 (148 aa).

Belongs to the eukaryotic ribosomal protein eS6 family.

This Pyrobaculum arsenaticum (strain DSM 13514 / JCM 11321 / PZ6) protein is Small ribosomal subunit protein eS6.